The chain runs to 105 residues: UPF0473 protein SAG2089 (105 aa).

Belongs to the UPF0473 family.

This Streptococcus agalactiae serotype V (strain ATCC BAA-611 / 2603 V/R) protein is UPF0473 protein SAG2089.